We begin with the raw amino-acid sequence, 486 residues long: MITTEIKRVKNHINGEWVESTGTEVEAVPNPATGKIIAYVPLSPKEDVEKAVEAAKAAYETWSKVPVPNRSRQLYKYLQLLQENKEELAKIITLENGKTLTDATGEVQRGIEAVELATSTPNLMMGQALPNIASGIDGSIWRYPIGVVAGITPFNFPMMIPLWMFPLAIACGNTFVLKTSERTPLLAERLVELFYEAGFPKGVLNLVQGGKDVVNSILENKDIQAVSFVGSEPVARYVYETGTKHGKRVQALAGAKNHAIVMPDCNLEKTVQGVIGSAFASSGERCMACSVVAVVDEIADEFIDVLVAETKKLKVGDGFHEDNYVGPLIRESHKERVLGYINSGVADGATLLVDGRKIKEEVGEGYFVGATIFDGVNQEMKIWQDEIFAPVLSIVRVKDLEEGIKLTNQSKFANGAVIYTSNGKHAQTFRDNIDAGMIGVNVNVPAPMAFFAFAGNKASFFGDLGTNGTDGVQFYTRKKVVTERWF.

Phe154, Lys178, Glu181, Arg182, and Ser231 together coordinate NAD(+). The active-site Nucleophile is Cys286. Residue Glu386 participates in NAD(+) binding.

It belongs to the aldehyde dehydrogenase family. IolA subfamily. In terms of assembly, homotetramer.

The catalysed reaction is 3-oxopropanoate + NAD(+) + CoA + H2O = hydrogencarbonate + acetyl-CoA + NADH + H(+). It catalyses the reaction 2-methyl-3-oxopropanoate + NAD(+) + CoA + H2O = propanoyl-CoA + hydrogencarbonate + NADH + H(+). The protein operates within polyol metabolism; myo-inositol degradation into acetyl-CoA; acetyl-CoA from myo-inositol: step 7/7. In terms of biological role, catalyzes the oxidation of malonate semialdehyde (MSA) and methylmalonate semialdehyde (MMSA) into acetyl-CoA and propanoyl-CoA, respectively. Is involved in a myo-inositol catabolic pathway. Bicarbonate, and not CO2, is the end-product of the enzymatic reaction. The protein is Malonate-semialdehyde dehydrogenase 1 of Bacillus thuringiensis (strain Al Hakam).